The following is a 145-amino-acid chain: D-aminoacyl-tRNA deacylase (145 aa).

The short motif at 137–138 is the Gly-cisPro motif, important for rejection of L-amino acids element; it reads GP.

It belongs to the DTD family. As to quaternary structure, homodimer.

The protein resides in the cytoplasm. It carries out the reaction glycyl-tRNA(Ala) + H2O = tRNA(Ala) + glycine + H(+). It catalyses the reaction a D-aminoacyl-tRNA + H2O = a tRNA + a D-alpha-amino acid + H(+). An aminoacyl-tRNA editing enzyme that deacylates mischarged D-aminoacyl-tRNAs. Also deacylates mischarged glycyl-tRNA(Ala), protecting cells against glycine mischarging by AlaRS. Acts via tRNA-based rather than protein-based catalysis; rejects L-amino acids rather than detecting D-amino acids in the active site. By recycling D-aminoacyl-tRNA to D-amino acids and free tRNA molecules, this enzyme counteracts the toxicity associated with the formation of D-aminoacyl-tRNA entities in vivo and helps enforce protein L-homochirality. In Pseudoalteromonas atlantica (strain T6c / ATCC BAA-1087), this protein is D-aminoacyl-tRNA deacylase.